A 349-amino-acid polypeptide reads, in one-letter code: tRNA pseudouridine synthase D (349 aa).

Phe-27 lines the substrate pocket. The active-site Nucleophile is Asp-80. Asn-129 is a substrate binding site. The TRUD domain maps to 155 to 303; that stretch reads GVPNYFGAQR…VEAARRAMLL (149 aa). Phe-329 is a substrate binding site.

It belongs to the pseudouridine synthase TruD family.

It catalyses the reaction uridine(13) in tRNA = pseudouridine(13) in tRNA. Its function is as follows. Responsible for synthesis of pseudouridine from uracil-13 in transfer RNAs. The protein is tRNA pseudouridine synthase D of Shigella flexneri.